A 206-amino-acid chain; its full sequence is Large ribosomal subunit protein eL13z (206 aa).

The disordered stretch occupies residues 183–206; the sequence is ERTNKRHAGARAKRAADAEKEEKK. Residues 186–195 are compositionally biased toward basic residues; sequence NKRHAGARAK. Basic and acidic residues predominate over residues 196 to 206; it reads RAADAEKEEKK.

This sequence belongs to the eukaryotic ribosomal protein eL13 family.

The polypeptide is Large ribosomal subunit protein eL13z (Brassica napus (Rape)).